The following is a 465-amino-acid chain: tRNA modification GTPase MnmE (465 aa).

Residues arginine 27, glutamate 91, and arginine 130 each coordinate (6S)-5-formyl-5,6,7,8-tetrahydrofolate. The 160-residue stretch at 227 to 386 folds into the TrmE-type G domain; that stretch reads GLSTAIIGRP…LEAKIADLFF (160 aa). Asparagine 237 provides a ligand contact to K(+). Residues 237-242, 256-262, and 281-284 contribute to the GTP site; these read NVGKSS, TDIAGTT, and DTAG. Serine 241 is a Mg(2+) binding site. 3 residues coordinate K(+): threonine 256, isoleucine 258, and threonine 261. Threonine 262 serves as a coordination point for Mg(2+). (6S)-5-formyl-5,6,7,8-tetrahydrofolate is bound at residue lysine 465.

It belongs to the TRAFAC class TrmE-Era-EngA-EngB-Septin-like GTPase superfamily. TrmE GTPase family. As to quaternary structure, homodimer. Heterotetramer of two MnmE and two MnmG subunits. The cofactor is K(+).

The protein resides in the cytoplasm. In terms of biological role, exhibits a very high intrinsic GTPase hydrolysis rate. Involved in the addition of a carboxymethylaminomethyl (cmnm) group at the wobble position (U34) of certain tRNAs, forming tRNA-cmnm(5)s(2)U34. The chain is tRNA modification GTPase MnmE from Enterococcus faecalis (strain ATCC 700802 / V583).